Here is a 358-residue protein sequence, read N- to C-terminus: Naringenin,2-oxoglutarate 3-dioxygenase (358 aa).

The 105-residue stretch at 190-294 folds into the Fe2OG dioxygenase domain; sequence CVDMDQKIVV…RLSIATFQNP (105 aa). Fe cation contacts are provided by histidine 217, aspartate 219, and histidine 275. Arginine 285 is a 2-oxoglutarate binding site.

This sequence belongs to the iron/ascorbate-dependent oxidoreductase family. Interacts with Dihydroflavonol-4-reductase (TT3), chalcone synthase (TT4) and chalcone isomerase (TT5) to form a flavonoid enzyme complex. Requires Fe(2+) as cofactor. It depends on L-ascorbate as a cofactor.

It carries out the reaction a (2S)-flavan-4-one + 2-oxoglutarate + O2 = a (2R,3R)-dihydroflavonol + succinate + CO2. It participates in secondary metabolite biosynthesis; flavonoid biosynthesis. Functionally, catalyzes the 3-beta-hydroxylation of 2S-flavanones to 2R,3R-dihydroflavonols which are intermediates in the biosynthesis of flavonols, anthocyanidins, catechins and proanthocyanidins in plants. This is Naringenin,2-oxoglutarate 3-dioxygenase (F3H) from Arabidopsis thaliana (Mouse-ear cress).